The following is a 642-amino-acid chain: GIKEADATECILAIKAGEADAITLDGGEIYTAGQHPYDLQPIISEKYGSGSSCYYAVAVVKKDTGFSFKQLRGKKSCHTGIGKTAGWNIPIGTLLTTGQLVWSGQEDLPVESVSTFFSKSCVPGAGGLVGGKLCTLCPSDCSKSATNPYFGYAGAFKCLKDDAGDVAFINHLTVPASEKANYELLCLDGTRAPIDSYKTCNLARVPAHAVVSRVDPELAERIFTALTTVTGFSFFSSAGFGAANLMFKDTTQSLVRLPDGSNSFLYLGAKYMASIQSLKKESDQPITPAIKWCAVGHAEKKKCDSWSSFSVSDGVKSVACQISLTVEGCFQRIMRQEADAMSVDGGQVYTAGKCQLIPAMVEQYNQSLCSSAGTPQATYFAVAVVKKGSGVTWDNLRGKRSCHTGLGRTAGWNIPMGLVHSIHGSCDFGGFFPSGCAPGSEPSSTFCRQCAGSGSGVEDGSKCSASSVEKYYGYAGAFRCLVDGAGDVAFIKHTIVADNSDGQGPAWATALKSSDYQLICPGGVGRAEISDFASCNLAAVPSHAVVTRQDIRDDVVKMLLDQQRKFGIDGSDPLFRIYESKDGNNLLFKDSTKCLKEIPSLTTADAFLGTGYVNAIMSLRQCPETASELEKTCISSSCSTAE.

Transferrin-like domains lie at Gly-1–Lys-280 and Ile-290–Gln-621. Residues Asp-25 and Tyr-54 each contribute to the Fe(3+) site. Intrachain disulfides connect Cys-77–Cys-158, Cys-121–Cys-137, and Cys-186–Cys-200. 4 residues coordinate hydrogencarbonate: Thr-79, Lys-83, Ala-85, and Gly-86. Fe(3+) is bound at residue Tyr-152. His-208 contributes to the Fe(3+) binding site. 2 disulfide bridges follow: Cys-293-Cys-329 and Cys-303-Cys-320. Asp-344 contributes to the Fe(3+) binding site. 7 cysteine pairs are disulfide-bonded: Cys-354-Cys-633, Cys-369-Cys-594, Cys-402-Cys-480, Cys-426-Cys-622, Cys-436-Cys-450, Cys-447-Cys-463, and Cys-520-Cys-535. Asn-365 is a glycosylation site (N-linked (GlcNAc...) asparagine). Tyr-379 provides a ligand contact to Fe(3+). Residues Thr-404, Arg-408, Ala-410, and Gly-411 each contribute to the hydrogencarbonate site. Tyr-474 provides a ligand contact to Fe(3+). His-543 is a binding site for Fe(3+).

This sequence belongs to the transferrin family. Monomer. Brain and liver; to a lesser extent in kidney and heart.

The protein resides in the secreted. In terms of biological role, transferrins are iron binding transport proteins which can bind two Fe(3+) ions in association with the binding of an anion, usually bicarbonate. In Gadus morhua (Atlantic cod), this protein is Serotransferrin (tf).